We begin with the raw amino-acid sequence, 367 residues long: mRNA-decapping enzyme-like protein (367 aa).

3 disordered regions span residues 144–179 (PKASSSKSEFEELEAKPTMAVMDGPLEPSSTARDAP), 196–246 (NTAS…SSSP), and 299–333 (PNNASHQQRSYGTPVLQPFPPPTPPPSLAPAPTGP). The segment covering 196-211 (NTASGSASGPYQSSAI) has biased composition (polar residues). The segment covering 212 to 234 (PHQPHQPHQPTIAPPVAAAAPPQ) has biased composition (low complexity). The span at 299-309 (PNNASHQQRSY) shows a compositional bias: polar residues. A compositionally biased stretch (pro residues) spans 315 to 331 (QPFPPPTPPPSLAPAPT).

The protein belongs to the DCP1 family. As to quaternary structure, homodimer. Component of the decapping complex. Interacts with DCP2 and DCP5. Interacts with BCHA1. As to expression, expressed in seedlings, mostly in root tips, root hairs, and the vascular system. Also present in roots, leaves, stems, and flowers.

Its subcellular location is the cytoplasm. It is found in the P-body. In terms of biological role, as a component of the decapping complex, involved in the degradation of mRNAs. Essential for postembryonic development. The polypeptide is mRNA-decapping enzyme-like protein (Arabidopsis thaliana (Mouse-ear cress)).